We begin with the raw amino-acid sequence, 435 residues long: UDP-N-acetylmuramate--L-alanine ligase (435 aa).

An ATP-binding site is contributed by 108–114 (GAHGKST).

Belongs to the MurCDEF family.

It localises to the cytoplasm. It catalyses the reaction UDP-N-acetyl-alpha-D-muramate + L-alanine + ATP = UDP-N-acetyl-alpha-D-muramoyl-L-alanine + ADP + phosphate + H(+). It functions in the pathway cell wall biogenesis; peptidoglycan biosynthesis. Cell wall formation. This Campylobacter curvus (strain 525.92) protein is UDP-N-acetylmuramate--L-alanine ligase.